A 439-amino-acid polypeptide reads, in one-letter code: Methylenetetrahydrofolate--tRNA-(uracil-5-)-methyltransferase TrmFO (439 aa).

Position 8–13 (8–13 (GAGLAG)) interacts with FAD.

It belongs to the MnmG family. TrmFO subfamily. FAD is required as a cofactor.

The protein localises to the cytoplasm. The catalysed reaction is uridine(54) in tRNA + (6R)-5,10-methylene-5,6,7,8-tetrahydrofolate + NADH + H(+) = 5-methyluridine(54) in tRNA + (6S)-5,6,7,8-tetrahydrofolate + NAD(+). It catalyses the reaction uridine(54) in tRNA + (6R)-5,10-methylene-5,6,7,8-tetrahydrofolate + NADPH + H(+) = 5-methyluridine(54) in tRNA + (6S)-5,6,7,8-tetrahydrofolate + NADP(+). Catalyzes the folate-dependent formation of 5-methyl-uridine at position 54 (M-5-U54) in all tRNAs. The protein is Methylenetetrahydrofolate--tRNA-(uracil-5-)-methyltransferase TrmFO of Magnetococcus marinus (strain ATCC BAA-1437 / JCM 17883 / MC-1).